Here is a 791-residue protein sequence, read N- to C-terminus: Endonuclease MutS2 (791 aa).

Residue 339-346 (GPNTGGKT) participates in ATP binding. The 76-residue stretch at 715–790 (LDLRGERYET…GSGVTIADLK (76 aa)) folds into the Smr domain.

Belongs to the DNA mismatch repair MutS family. MutS2 subfamily. In terms of assembly, homodimer. Binds to stalled ribosomes, contacting rRNA.

Endonuclease that is involved in the suppression of homologous recombination and thus may have a key role in the control of bacterial genetic diversity. In terms of biological role, acts as a ribosome collision sensor, splitting the ribosome into its 2 subunits. Detects stalled/collided 70S ribosomes which it binds and splits by an ATP-hydrolysis driven conformational change. Acts upstream of the ribosome quality control system (RQC), a ribosome-associated complex that mediates the extraction of incompletely synthesized nascent chains from stalled ribosomes and their subsequent degradation. Probably generates substrates for RQC. This chain is Endonuclease MutS2, found in Halothermothrix orenii (strain H 168 / OCM 544 / DSM 9562).